A 444-amino-acid chain; its full sequence is Platelet-activating factor acetylhydrolase (444 aa).

The first 21 residues, 1–21, serve as a signal peptide directing secretion; it reads MLPSKLHALFCLCTCLALVYP. N-linked (GlcNAc...) asparagine glycans are attached at residues Asn-60 and Asn-200. The active-site Nucleophile is Ser-274. Residues Asp-297 and His-352 each act as charge relay system in the active site. N-linked (GlcNAc...) asparagine glycosylation is found at Asn-424 and Asn-434.

The protein belongs to the AB hydrolase superfamily. Lipase family. Post-translationally, N-glycosylated. Plasma.

It localises to the secreted. Its subcellular location is the extracellular space. The catalysed reaction is a 1-O-alkyl-2-acetyl-sn-glycero-3-phosphocholine + H2O = a 1-O-alkyl-sn-glycero-3-phosphocholine + acetate + H(+). It carries out the reaction 1-O-decyl-2-acetyl-sn-glycero-3-phosphocholine + H2O = 1-O-decyl-sn-glycero-3-phosphocholine + acetate + H(+). It catalyses the reaction 1-O-dodecyl-2-acetyl-sn-glycero-3-phosphocholine + H2O = 1-O-dodecyl-sn-glycero-3-phosphocholine + acetate + H(+). The enzyme catalyses 1-O-tetradecyl-2-acetyl-sn-glycero-3-phosphocholine + H2O = 1-O-tetradecyl-sn-glycero-3-phosphocholine + acetate + H(+). The catalysed reaction is 1-O-hexadecyl-2-acetyl-sn-glycero-3-phosphocholine + H2O = 1-O-hexadecyl-sn-glycero-3-phosphocholine + acetate + H(+). It carries out the reaction 1-O-octadecyl-2-acetyl-sn-glycero-3-phosphocholine + H2O = 1-O-octadecyl-sn-glycero-3-phosphocholine + acetate + H(+). It catalyses the reaction 1-hexadecanoyl-2-acetyl-sn-glycero-3-phosphocholine + H2O = 1-hexadecanoyl-sn-glycero-3-phosphocholine + acetate + H(+). The enzyme catalyses 1-hexadecanoyl-2-propionyl-sn-glycero-3-phosphocholine + H2O = propanoate + 1-hexadecanoyl-sn-glycero-3-phosphocholine + H(+). The catalysed reaction is 1-hexadecanoyl-2-butanoyl-sn-glycero-3-phosphocholine + H2O = butanoate + 1-hexadecanoyl-sn-glycero-3-phosphocholine + H(+). It carries out the reaction 1-hexadecanoyl-2-pentanoyl-sn-glycero-3-phosphocholine + H2O = pentanoate + 1-hexadecanoyl-sn-glycero-3-phosphocholine + H(+). It catalyses the reaction 1-hexadecanoyl-2-glutaroyl-sn-glycero-3-phosphocholine + H2O = glutarate + 1-hexadecanoyl-sn-glycero-3-phosphocholine + H(+). The enzyme catalyses 1-hexadecanoyl-2-(5-oxopentanoyl)-sn-glycero-3-phosphocholine + H2O = 5-oxopentanoate + 1-hexadecanoyl-sn-glycero-3-phosphocholine + H(+). The catalysed reaction is 1-hexadecanoyl-2-(9-oxononanoyl)-sn-glycero-3-phosphocholine + H2O = 9-oxononanoate + 1-hexadecanoyl-sn-glycero-3-phosphocholine + H(+). It carries out the reaction 1-hexadecanoyl-2-[9-hydroperoxy-(10E-octadecenoyl)]-sn-glycero-3-phosphocholine + H2O = 9-hydroperoxy-10E-octadecenoate + 1-hexadecanoyl-sn-glycero-3-phosphocholine + H(+). It catalyses the reaction 1-hexadecanoyl-2-(10-hydroperoxy-8E-octadecenoyl)-sn-glycero-3-phosphocholine + H2O = 10-hydroperoxy-(8E)-octadecenoate + 1-hexadecanoyl-sn-glycero-3-phosphocholine + H(+). Lipoprotein-associated calcium-independent phospholipase A2 involved in phospholipid catabolism during inflammatory and oxidative stress response. At the lipid-aqueous interface, hydrolyzes the ester bond of fatty acyl group attached at sn-2 position of phospholipids (phospholipase A2 activity). Specifically targets phospholipids with a short-chain fatty acyl group at sn-2 position. Can hydrolyze phospholipids with long fatty acyl chains, only if they carry oxidized functional groups. Hydrolyzes and inactivates platelet-activating factor (PAF, 1-O-alkyl-2-acetyl-sn-glycero-3-phosphocholine), a potent pro-inflammatory signaling lipid that acts through PTAFR on various innate immune cells. Hydrolyzes oxidatively truncated phospholipids carrying an aldehyde group at omega position, preventing their accumulation in low-density lipoprotein (LDL) particles and uncontrolled pro-inflammatory effects. As part of high-density lipoprotein (HDL) particles, can hydrolyze phospholipids having long-chain fatty acyl hydroperoxides at sn-2 position and protect against potential accumulation of these oxylipins in the vascular wall. Catalyzes the release from membrane phospholipids of F2-isoprostanes, lipid biomarkers of cellular oxidative damage. This is Platelet-activating factor acetylhydrolase (PLA2G7) from Bos taurus (Bovine).